Consider the following 107-residue polypeptide: MFGYAVRRALRKSKTLRYGVPMLLLIVGGSFGLREFSQIRYDAVKIKIDPELEKKLKMNKVSLESEYEKIKDSTFDDWKNIRGPRPWEDPDLLQGRNPEILKTNKTT.

The Mitochondrial matrix segment spans residues 1 to 14 (MFGYAVRRALRKSK). The helical transmembrane segment at 15–37 (TLRYGVPMLLLIVGGSFGLREFS) threads the bilayer. The Mitochondrial intermembrane portion of the chain corresponds to 38–107 (QIRYDAVKIK…PEILKTNKTT (70 aa)). The segment at 80 to 107 (NIRGPRPWEDPDLLQGRNPEILKTNKTT) is disordered.

Belongs to the COX16 family. As to quaternary structure, associates with the MITRAC complex. Interacts with MT-CO2/COX; specifically interacts with newly synthesized MT-CO2/COX. Interacts with SCO1, SCO2 and COA6.

The protein localises to the mitochondrion inner membrane. Required for the assembly of the mitochondrial respiratory chain complex IV (CIV), also known as cytochrome c oxidase. Promotes the insertion of copper into the active site of cytochrome c oxidase subunit II (MT-CO2/COX2). Interacts specifically with newly synthesized MT-CO2/COX and its copper center-forming metallochaperones SCO1, SCO2 and COA6. Probably facilitates MT-CO2/COX2 association with the MITRAC assembly intermediate containing MT-CO1/COX1, thereby participating in merging the MT-CO1/COX1 and MT-CO2/COX2 assembly lines. This is Cytochrome c oxidase assembly protein COX16 homolog, mitochondrial from Bos taurus (Bovine).